The following is a 200-amino-acid chain: 3-isopropylmalate dehydratase small subunit (200 aa).

Belongs to the LeuD family. LeuD type 1 subfamily. As to quaternary structure, heterodimer of LeuC and LeuD.

It catalyses the reaction (2R,3S)-3-isopropylmalate = (2S)-2-isopropylmalate. The protein operates within amino-acid biosynthesis; L-leucine biosynthesis; L-leucine from 3-methyl-2-oxobutanoate: step 2/4. Its function is as follows. Catalyzes the isomerization between 2-isopropylmalate and 3-isopropylmalate, via the formation of 2-isopropylmaleate. The polypeptide is 3-isopropylmalate dehydratase small subunit (Histophilus somni (strain 129Pt) (Haemophilus somnus)).